The chain runs to 163 residues: Peptide methionine sulfoxide reductase MsrA 1 (163 aa).

The active site involves Cys-21.

The protein belongs to the MsrA Met sulfoxide reductase family.

It carries out the reaction L-methionyl-[protein] + [thioredoxin]-disulfide + H2O = L-methionyl-(S)-S-oxide-[protein] + [thioredoxin]-dithiol. The catalysed reaction is [thioredoxin]-disulfide + L-methionine + H2O = L-methionine (S)-S-oxide + [thioredoxin]-dithiol. Functionally, has an important function as a repair enzyme for proteins that have been inactivated by oxidation. Catalyzes the reversible oxidation-reduction of methionine sulfoxide in proteins to methionine. The sequence is that of Peptide methionine sulfoxide reductase MsrA 1 (msrA1) from Nostoc sp. (strain PCC 7120 / SAG 25.82 / UTEX 2576).